The chain runs to 147 residues: Acidic phospholipase A2 beta-bungarotoxin A4 chain (147 aa).

The signal sequence occupies residues 1 to 19 (MNPAHLLVLSAVCVSLLGA). A propeptide spanning residues 20-27 (ANIPPQHL) is cleaved from the precursor. 6 disulfides stabilise this stretch: Cys54/Cys146, Cys56/Cys72, Cys71/Cys127, Cys78/Cys120, Cys88/Cys113, and Cys106/Cys118. Ca(2+) contacts are provided by Tyr55, Gly57, and Gly59. The active site involves His75. Asp76 is a binding site for Ca(2+). The active site involves Asp121.

It belongs to the phospholipase A2 family. Group I subfamily. D49 sub-subfamily. Heterodimer; disulfide-linked. The A chains have phospholipase A2 activity and the B chains show homology with the basic protease inhibitors. Ca(2+) serves as cofactor. Expressed by the venom gland.

It localises to the secreted. The enzyme catalyses a 1,2-diacyl-sn-glycero-3-phosphocholine + H2O = a 1-acyl-sn-glycero-3-phosphocholine + a fatty acid + H(+). Its function is as follows. Snake venom phospholipase A2 (PLA2) that inhibits neuromuscular transmission by blocking acetylcholine release from the nerve termini. PLA2 catalyzes the calcium-dependent hydrolysis of the 2-acyl groups in 3-sn-phosphoglycerides. The protein is Acidic phospholipase A2 beta-bungarotoxin A4 chain of Bungarus multicinctus (Many-banded krait).